The primary structure comprises 519 residues: Protein nucleotidyltransferase YdiU (519 aa).

ATP contacts are provided by Gly-100, Gly-102, Arg-103, Lys-123, Asp-135, Gly-136, Arg-193, and Arg-200. The active-site Proton acceptor is Asp-270. Residues Asn-271 and Asp-280 each contribute to the Mg(2+) site. Residue Asp-280 coordinates ATP.

Belongs to the SELO family. The cofactor is Mg(2+). Mn(2+) serves as cofactor.

The catalysed reaction is L-seryl-[protein] + ATP = 3-O-(5'-adenylyl)-L-seryl-[protein] + diphosphate. The enzyme catalyses L-threonyl-[protein] + ATP = 3-O-(5'-adenylyl)-L-threonyl-[protein] + diphosphate. It catalyses the reaction L-tyrosyl-[protein] + ATP = O-(5'-adenylyl)-L-tyrosyl-[protein] + diphosphate. It carries out the reaction L-histidyl-[protein] + UTP = N(tele)-(5'-uridylyl)-L-histidyl-[protein] + diphosphate. The catalysed reaction is L-seryl-[protein] + UTP = O-(5'-uridylyl)-L-seryl-[protein] + diphosphate. The enzyme catalyses L-tyrosyl-[protein] + UTP = O-(5'-uridylyl)-L-tyrosyl-[protein] + diphosphate. Its function is as follows. Nucleotidyltransferase involved in the post-translational modification of proteins. It can catalyze the addition of adenosine monophosphate (AMP) or uridine monophosphate (UMP) to a protein, resulting in modifications known as AMPylation and UMPylation. The chain is Protein nucleotidyltransferase YdiU from Xylella fastidiosa (strain 9a5c).